The following is a 453-amino-acid chain: Growth/differentiation factor 9 (453 aa).

The first 27 residues, 1–27 (MALPNKFFLWFCCFAWLCFPISLDSLP), serve as a signal peptide directing secretion. Residues 28 to 318 (SRGEAQIVAR…EGVRSSRHRR (291 aa)) constitute a propeptide that is removed on maturation. N-linked (GlcNAc...) asparagine glycans are attached at residues Asn-163, Asn-236, Asn-255, and Asn-269. Residues 304-328 (GEEAAEGVRSSRHRRDQESASSELK) form a disordered region. Positions 318–328 (RDQESASSELK) are enriched in basic and acidic residues. A glycan (N-linked (GlcNAc...) asparagine) is linked at Asn-337. Disulfide bonds link Cys-352-Cys-418, Cys-381-Cys-450, and Cys-385-Cys-452.

Belongs to the TGF-beta family. In terms of assembly, homodimer or heterodimer (Potential). But, in contrast to other members of this family, cannot be disulfide-linked. Phosphorylated; phosphorylation is critical for GDF9 function.

Its subcellular location is the secreted. In terms of biological role, required for ovarian folliculogenesis. This Ovis aries (Sheep) protein is Growth/differentiation factor 9 (GDF9).